The primary structure comprises 144 residues: Large ribosomal subunit protein uL15 (144 aa).

A disordered region spans residues 1-52 (MRLNTLSPANGARHSRKRLGRGIGSGFGKTSGRGHKGQKSRSGSSIRRGFEG). Residues 21–31 (RGIGSGFGKTS) show a composition bias toward gly residues.

This sequence belongs to the universal ribosomal protein uL15 family. As to quaternary structure, part of the 50S ribosomal subunit.

Binds to the 23S rRNA. The chain is Large ribosomal subunit protein uL15 from Buchnera aphidicola subsp. Acyrthosiphon pisum (strain 5A).